Here is a 181-residue protein sequence, read N- to C-terminus: Oligoribonuclease (181 aa).

Positions 8–171 constitute an Exonuclease domain; sequence LIWIDMEMTG…ADIYDSIEEL (164 aa). Tyr-129 is an active-site residue.

It belongs to the oligoribonuclease family.

The protein resides in the cytoplasm. 3'-to-5' exoribonuclease specific for small oligoribonucleotides. In Nitrosomonas eutropha (strain DSM 101675 / C91 / Nm57), this protein is Oligoribonuclease.